The following is a 409-amino-acid chain: Peptidase T (409 aa).

Histidine 78 is a Zn(2+) binding site. Aspartate 80 is an active-site residue. Aspartate 140 contributes to the Zn(2+) binding site. Glutamate 173 (proton acceptor) is an active-site residue. The Zn(2+) site is built by glutamate 174, aspartate 196, and histidine 379.

It belongs to the peptidase M20B family. It depends on Zn(2+) as a cofactor.

Its subcellular location is the cytoplasm. The catalysed reaction is Release of the N-terminal residue from a tripeptide.. Its function is as follows. Cleaves the N-terminal amino acid of tripeptides. The sequence is that of Peptidase T from Salmonella dublin (strain CT_02021853).